We begin with the raw amino-acid sequence, 240 residues long: Carboxy-S-adenosyl-L-methionine synthase (240 aa).

S-adenosyl-L-methionine contacts are provided by residues Tyr35, Gly61–Ser63, Asp86–Asn87, Asp112–Ile113, and Arg194.

Belongs to the class I-like SAM-binding methyltransferase superfamily. Cx-SAM synthase family. As to quaternary structure, homodimer.

It catalyses the reaction prephenate + S-adenosyl-L-methionine = carboxy-S-adenosyl-L-methionine + 3-phenylpyruvate + H2O. Its function is as follows. Catalyzes the conversion of S-adenosyl-L-methionine (SAM) to carboxy-S-adenosyl-L-methionine (Cx-SAM). The protein is Carboxy-S-adenosyl-L-methionine synthase of Wolinella succinogenes (strain ATCC 29543 / DSM 1740 / CCUG 13145 / JCM 31913 / LMG 7466 / NCTC 11488 / FDC 602W) (Vibrio succinogenes).